Consider the following 813-residue polypeptide: LPS-assembly protein LptD (813 aa).

The interval 1–29 is disordered; that stretch reads MTEQRRSPNNRALPSPAPTSVPARARRAG. Residues 1 to 52 form the signal peptide; that stretch reads MTEQRRSPNNRALPSPAPTSVPARARRAGGLHAGALRPLVLAMASLSAGAHA.

The protein belongs to the LptD family. In terms of assembly, component of the lipopolysaccharide transport and assembly complex. Interacts with LptE and LptA.

The protein resides in the cell outer membrane. In terms of biological role, together with LptE, is involved in the assembly of lipopolysaccharide (LPS) at the surface of the outer membrane. This chain is LPS-assembly protein LptD, found in Cupriavidus necator (strain ATCC 17699 / DSM 428 / KCTC 22496 / NCIMB 10442 / H16 / Stanier 337) (Ralstonia eutropha).